The primary structure comprises 396 residues: NADH-quinone oxidoreductase subunit D 1 (396 aa).

It belongs to the complex I 49 kDa subunit family. In terms of assembly, NDH-1 is composed of 14 different subunits. Subunits NuoB, C, D, E, F, and G constitute the peripheral sector of the complex.

It is found in the cell inner membrane. It carries out the reaction a quinone + NADH + 5 H(+)(in) = a quinol + NAD(+) + 4 H(+)(out). NDH-1 shuttles electrons from NADH, via FMN and iron-sulfur (Fe-S) centers, to quinones in the respiratory chain. The immediate electron acceptor for the enzyme in this species is believed to be ubiquinone. Couples the redox reaction to proton translocation (for every two electrons transferred, four hydrogen ions are translocated across the cytoplasmic membrane), and thus conserves the redox energy in a proton gradient. In Beijerinckia indica subsp. indica (strain ATCC 9039 / DSM 1715 / NCIMB 8712), this protein is NADH-quinone oxidoreductase subunit D 1.